Here is a 386-residue protein sequence, read N- to C-terminus: Succinate--CoA ligase [ADP-forming] subunit beta (386 aa).

An ATP-grasp domain is found at 9 to 244 (KELLRSYGVP…ETEEDPREVE (236 aa)). Residues lysine 46, 53–55 (GRG), glutamate 99, cysteine 102, and glutamate 107 contribute to the ATP site. Mg(2+)-binding residues include asparagine 199 and aspartate 213. Substrate is bound by residues asparagine 264 and 321–323 (GIM).

It belongs to the succinate/malate CoA ligase beta subunit family. Heterotetramer of two alpha and two beta subunits. Mg(2+) is required as a cofactor.

It catalyses the reaction succinate + ATP + CoA = succinyl-CoA + ADP + phosphate. The enzyme catalyses GTP + succinate + CoA = succinyl-CoA + GDP + phosphate. It participates in carbohydrate metabolism; tricarboxylic acid cycle; succinate from succinyl-CoA (ligase route): step 1/1. In terms of biological role, succinyl-CoA synthetase functions in the citric acid cycle (TCA), coupling the hydrolysis of succinyl-CoA to the synthesis of either ATP or GTP and thus represents the only step of substrate-level phosphorylation in the TCA. The beta subunit provides nucleotide specificity of the enzyme and binds the substrate succinate, while the binding sites for coenzyme A and phosphate are found in the alpha subunit. The sequence is that of Succinate--CoA ligase [ADP-forming] subunit beta from Exiguobacterium sibiricum (strain DSM 17290 / CCUG 55495 / CIP 109462 / JCM 13490 / 255-15).